A 385-amino-acid chain; its full sequence is Meiosis-specific protein MEI4 (385 aa).

The segment at 1-126 (MDVQKWYLRT…LSQHFVESCT (126 aa)) is interaction with REC114. Residues 86–110 (AQEPKSSESTLTSMEDSGCDLSNEQ) form a disordered region. Residues 92–107 (SESTLTSMEDSGCDLS) show a composition bias toward polar residues.

Belongs to the MEI4L family. Part of the MCD recombinosome complex, at least composed of IHO1, REC114 and MEI4. Forms a complex with REC114; the interaction is required for MEI4 stability. Interacts (via N-terminal domain) with REC114 (via C-terminal domain). Interacts with IHO1.

It is found in the chromosome. Required for DNA double-strand breaks (DSBs) formation in unsynapsed regions during meiotic recombination. Probably acts by forming a complex with IHO1 and REC114, which activates DSBs formation in unsynapsed regions, an essential step to ensure completion of synapsis. This is Meiosis-specific protein MEI4 from Homo sapiens (Human).